The primary structure comprises 362 residues: Adenosine deaminase (362 aa).

His-19 and His-21 together coordinate Zn(2+). Positions 21, 23, and 181 each coordinate substrate. Residue His-208 participates in Zn(2+) binding. The active-site Proton donor is the Glu-211. Residue Asp-300 participates in Zn(2+) binding.

The protein belongs to the metallo-dependent hydrolases superfamily. Adenosine and AMP deaminases family. Adenosine deaminase subfamily. The cofactor is Zn(2+).

The catalysed reaction is adenosine + H2O + H(+) = inosine + NH4(+). It carries out the reaction 2'-deoxyadenosine + H2O + H(+) = 2'-deoxyinosine + NH4(+). Its function is as follows. Catalyzes the hydrolytic deamination of adenosine and 2-deoxyadenosine. The protein is Adenosine deaminase of Mycobacterium leprae (strain TN).